We begin with the raw amino-acid sequence, 1014 residues long: Endogenous retrovirus group K member 10 Pol protein (1014 aa).

Residues 57–245 (LEKGHIEPSF…TPFHYLGMQI (189 aa)) form the Reverse transcriptase domain. The short motif at 161-164 (LPQG) is the LPQG element. The short motif at 195 to 198 (YIDD) is the YXDD element. The 131-residue stretch at 460 to 590 (LENALTVFTD…ADLLVSSALI (131 aa)) folds into the RNase H type-1 domain. Residues Asp-469, Glu-497, Asp-517, and Asp-582 each coordinate Mg(2+). An Integrase-type zinc finger spans residues 587-628 (SALIKAQELHALTHVNAAGLKNKFDVTWKQAKDIVQHCTQCQ). Residues His-596, His-600, Cys-624, and Cys-627 each coordinate Zn(2+). The 162-residue stretch at 642–803 (RGLCPNALWQ…TSAEQHLTGK (162 aa)) folds into the Integrase catalytic domain. The segment at residues 811 to 859 (KLIWWKDNKNKTWEIGKVITWGRGFACVSPGENQLPVWLPTRHLKFYNE) is a DNA-binding region (integrase-type).

The protein belongs to the beta type-B retroviral polymerase family. HERV class-II K(HML-2) pol subfamily.

It carries out the reaction DNA(n) + a 2'-deoxyribonucleoside 5'-triphosphate = DNA(n+1) + diphosphate. The catalysed reaction is Endonucleolytic cleavage to 5'-phosphomonoester.. Its function is as follows. Early post-infection, the reverse transcriptase converts the viral RNA genome into double-stranded viral DNA. The RNase H domain of the reverse transcriptase performs two functions. It degrades the RNA template and specifically removes the RNA primer from the RNA/DNA hybrid. Following nuclear import, the integrase catalyzes the insertion of the linear, double-stranded viral DNA into the host cell chromosome. Endogenous Pol proteins may have kept, lost or modified their original function during evolution. The polypeptide is Endogenous retrovirus group K member 10 Pol protein (ERVK-10) (Homo sapiens (Human)).